A 268-amino-acid chain; its full sequence is Small ribosomal subunit protein uS3 (268 aa).

The KH type-2 domain maps to 39-107 (VREYLKKKLK…PVHVNIEEIR (69 aa)). Residues 216–268 (VEEVAEEKRPRRNARPGGDRRPRRDGEGGGPAGARRGAPRRAGGAGGDGKTGE) are disordered. Residues 232–242 (GGDRRPRRDGE) are compositionally biased toward basic and acidic residues. Over residues 248–257 (GARRGAPRRA) the composition is skewed to low complexity. A compositionally biased stretch (gly residues) spans 258-268 (GGAGGDGKTGE).

This sequence belongs to the universal ribosomal protein uS3 family. Part of the 30S ribosomal subunit. Forms a tight complex with proteins S10 and S14.

Binds the lower part of the 30S subunit head. Binds mRNA in the 70S ribosome, positioning it for translation. This chain is Small ribosomal subunit protein uS3, found in Paraburkholderia phytofirmans (strain DSM 17436 / LMG 22146 / PsJN) (Burkholderia phytofirmans).